A 64-amino-acid chain; its full sequence is Phi-buthitoxin-Hj1a (64 aa).

The N-terminal stretch at 1-18 (MNSFVVVLLLFIAILCNA) is a signal peptide. Cystine bridges form between C29–C43, C36–C49, and C42–C58.

It belongs to the scorpion calcin-like family. As to expression, expressed by the venom gland.

Its subcellular location is the secreted. Its function is as follows. May increase intracellular calcium release through the activation of nuclear inositol 1,4,5-trisphosphate receptors (ITPR) of cardiomyocytes, thereby causing an increase in the contraction frequency of these cells. The polypeptide is Phi-buthitoxin-Hj1a (Hottentotta judaicus (Black scorpion)).